The sequence spans 394 residues: Ceramide synthase 4 (394 aa).

Over 1–31 the chain is Lumenal; the sequence is MLSSFNEWFWQDRFWLPPNVTWTELEDRDGR. Asparagine 19 is a glycosylation site (N-linked (GlcNAc...) asparagine). Residues 32–52 form a helical membrane-spanning segment; it reads VYPHPQDLLAALPLALVLLAM. Residues 67 to 128 are homeobox-like; that stretch reads WLGVRDQTRR…RRRRNQDRPQ (62 aa). The TLC domain occupies 131–332; sequence KKFCEASWRF…ILRMLYSFMK (202 aa). The next 4 membrane-spanning stretches (helical) occupy residues 140–160, 179–199, 209–229, and 260–280; these read FLFY…ESWL, LYWW…RLPF, QVIH…ANLL, and VCDA…LVLF. A Last loop motif motif is present at residues 291 to 301; it reads ESISNRGPFFG. A helical membrane pass occupies residues 304-324; it reads FFNGLLMLLQLLHVFWSCLIL. Residues 325-394 lie on the Cytoplasmic side of the membrane; it reads RMLYSFMKKG…RLTNRHTTAT (70 aa). A disordered region spans residues 341 to 394; it reads RSDVEESDSSEEAAAAQEPLQLKNGAAGGPRPAPTDGPRSRVAGRLTNRHTTAT. Phosphoserine occurs at positions 342, 349, and 350.

Post-translationally, phosphorylated at the C-terminus by CK2. N-glycosylated.

The protein resides in the endoplasmic reticulum membrane. It carries out the reaction sphinganine + octadecanoyl-CoA = N-(octadecanoyl)-sphinganine + CoA + H(+). The catalysed reaction is eicosanoyl-CoA + sphinganine = N-eicosanoylsphinganine + CoA + H(+). The enzyme catalyses docosanoyl-CoA + sphinganine = N-docosanoylsphinganine + CoA + H(+). It catalyses the reaction tetracosanoyl-CoA + sphinganine = N-tetracosanoylsphinganine + CoA + H(+). It carries out the reaction hexacosanoyl-CoA + sphinganine = N-hexacosanoylsphinganine + CoA + H(+). The catalysed reaction is a fatty acyl-CoA + sphing-4-enine = an N-acylsphing-4-enine + CoA + H(+). The enzyme catalyses sphing-4-enine + octadecanoyl-CoA = N-octadecanoylsphing-4-enine + CoA + H(+). It catalyses the reaction hexadecasphinganine + octadecanoyl-CoA = N-octadecanoylhexadecasphinganine + CoA + H(+). It participates in lipid metabolism; sphingolipid metabolism. Functionally, ceramide synthase that catalyzes formation of ceramide from sphinganine and acyl-CoA substrates, with high selectivity toward long and very-long chains (C18:0-C22:0) as acyl donor. The polypeptide is Ceramide synthase 4 (Homo sapiens (Human)).